The following is a 145-amino-acid chain: 5-hydroxymethyl-dUMP N-hydrolase (145 aa).

Residues glycine 7, isoleucine 9, arginine 10, glycine 11, serine 79, glycine 81, glutamate 85, and serine 109 each contribute to the 5-hydroxymethyl-dUMP site.

This sequence belongs to the 2'-deoxynucleoside 5'-phosphate N-hydrolase 1 family. In terms of assembly, monomer and homodimer.

It is found in the cytoplasm. The protein localises to the nucleus. The enzyme catalyses 5-hydroxymethyl-dUMP + H2O = 5-hydroxymethyluracil + 2-deoxy-D-ribose 5-phosphate. Part of a nucleotide salvage pathway that eliminates epigenetically modified 5-hydroxymethyl-dCMP (hmdCMP) in a two-step process entailing deamination to cytotoxic 5-hydroxymethyl-dUMP (hmdUMP), followed by its hydrolysis into 5-hydroxymethyluracil (hmU) and 2-deoxy-D-ribose 5-phosphate (deoxyribosephosphate). Catalyzes the second step in that pathway, the hydrolysis of the N-glycosidic bond in hmdUMP, degrading this cytotoxic nucleotide to avoid its genomic integration. The sequence is that of 5-hydroxymethyl-dUMP N-hydrolase from Esox lucius (Northern pike).